Here is a 492-residue protein sequence, read N- to C-terminus: Probable cytochrome P450 513A3 (492 aa).

The helical transmembrane segment at 1–21 (MTSLTLYLIIFSIILYLFVNR) threads the bilayer. C437 lines the heme pocket.

It belongs to the cytochrome P450 family. Requires heme as cofactor.

It is found in the membrane. This Dictyostelium discoideum (Social amoeba) protein is Probable cytochrome P450 513A3 (cyp513A3).